A 354-amino-acid chain; its full sequence is Ribosomal RNA large subunit methyltransferase M (354 aa).

S-adenosyl-L-methionine is bound by residues Ser183, 216–219 (SPGG), Asp235, Asp255, and Asp271. Lys300 acts as the Proton acceptor in catalysis.

It belongs to the class I-like SAM-binding methyltransferase superfamily. RNA methyltransferase RlmE family. RlmM subfamily. Monomer.

Its subcellular location is the cytoplasm. It catalyses the reaction cytidine(2498) in 23S rRNA + S-adenosyl-L-methionine = 2'-O-methylcytidine(2498) in 23S rRNA + S-adenosyl-L-homocysteine + H(+). Catalyzes the 2'-O-methylation at nucleotide C2498 in 23S rRNA. This is Ribosomal RNA large subunit methyltransferase M from Pseudomonas putida (strain ATCC 700007 / DSM 6899 / JCM 31910 / BCRC 17059 / LMG 24140 / F1).